Here is a 116-residue protein sequence, read N- to C-terminus: MVSKQPRKQRKARYNAPLHVRQKFMGARLSEALSKEYGTRSAAVIAGDTVKVMRGDYKGTEGKVQAVSLQDGTISVDGVISTKVDGTEVPRPIYPSNVMITKLELKDERRASSIKK.

This sequence belongs to the universal ribosomal protein uL24 family. Part of the 50S ribosomal subunit.

Its function is as follows. One of two assembly initiator proteins, it binds directly to the 5'-end of the 23S rRNA, where it nucleates assembly of the 50S subunit. Located at the polypeptide exit tunnel on the outside of the subunit. This is Large ribosomal subunit protein uL24 from Methanosarcina barkeri (strain Fusaro / DSM 804).